A 534-amino-acid chain; its full sequence is Envelope glycoprotein (534 aa).

The signal sequence occupies residues 1–34; sequence MEGPTHPKPSKDKTFSWDLMILVGVLLRLDVGMA. At 35 to 534 the chain is on the extracellular side; it reads NPSPHQIYNV…SLTSLSEVVL (500 aa). N-linked (GlcNAc...) asparagine; by host glycans are attached at residues Asn-43 and Asn-58. 2 disulfides stabilise this stretch: Cys-115/Cys-132 and Cys-124/Cys-137. A disordered region spans residues 245–279; the sequence is AMGPNLVLPDQKPPSRQSQIESRVTPHHSQGNGGT. The span at 258–274 shows a compositional bias: polar residues; it reads PSRQSQIESRVTPHHSQ. Asn-286, Asn-322, and Asn-327 each carry an N-linked (GlcNAc...) asparagine; by host glycan. Positions 332 to 335 match the CXXC motif; the sequence is CWLC. N-linked (GlcNAc...) asparagine; by host glycosylation is found at Asn-351, Asn-354, and Asn-430. The fusion peptide stretch occupies residues 468–488; sequence ISLTVALMLGGLTVGGIAAGV. A coiled-coil region spans residues 496 to 534; sequence LETAQFRQLQMAMHTDIQALEESISALEKSLTSLSEVVL.

In terms of assembly, the mature envelope protein (Env) consists of a trimer of SU-TM heterodimers attached by noncovalent interactions or by a labile interchain disulfide bond. Post-translationally, specific enzymatic cleavages in vivo yield mature proteins. Envelope glycoproteins are synthesized as an inactive precursor that is N-glycosylated and processed likely by host cell furin or by a furin-like protease in the Golgi to yield the mature SU and TM proteins. The cleavage site between SU and TM requires the minimal sequence [KR]-X-[KR]-R.

The protein resides in the virion membrane. It localises to the host cell membrane. Its function is as follows. The surface protein (SU) attaches the virus to the host cell by binding to its receptor. This interaction triggers the refolding of the transmembrane protein (TM) and is thought to activate its fusogenic potential by unmasking its fusion peptide. Fusion occurs at the host cell plasma membrane. The transmembrane protein (TM) acts as a class I viral fusion protein. Under the current model, the protein has at least 3 conformational states: pre-fusion native state, pre-hairpin intermediate state, and post-fusion hairpin state. During viral and target cell membrane fusion, the coiled coil regions (heptad repeats) assume a trimer-of-hairpins structure, positioning the fusion peptide in close proximity to the C-terminal region of the ectodomain. The formation of this structure appears to drive apposition and subsequent fusion of viral and target cell membranes. Membranes fusion leads to delivery of the nucleocapsid into the cytoplasm. This chain is Envelope glycoprotein (env), found in Feline sarcoma virus (strain Snyder-Theilen).